Here is a 216-residue protein sequence, read N- to C-terminus: Ion-translocating oxidoreductase complex subunit G (216 aa).

Residues 14 to 34 (ALVLGSFGFLAASFVSIIYVI) form a helical membrane-spanning segment. T181 is modified (FMN phosphoryl threonine).

It belongs to the RnfG family. The complex is composed of six subunits: RnfA, RnfB, RnfC, RnfD, RnfE and RnfG. FMN is required as a cofactor.

It localises to the cell inner membrane. Functionally, part of a membrane-bound complex that couples electron transfer with translocation of ions across the membrane. In Buchnera aphidicola subsp. Baizongia pistaciae (strain Bp), this protein is Ion-translocating oxidoreductase complex subunit G.